The sequence spans 92 residues: uncharacterized protein (92 aa).

Residues 1–29 (MAAQTDYKKQVVGILLSLAFVLFVFSFSE) form the signal peptide.

This is an uncharacterized protein from Bacillus subtilis (strain 168).